The primary structure comprises 206 residues: Imidazoleglycerol-phosphate dehydratase (206 aa).

Residues 1–21 form a disordered region; sequence MTTPSTAPTPAPRKAEVSRNT.

It belongs to the imidazoleglycerol-phosphate dehydratase family.

Its subcellular location is the cytoplasm. It catalyses the reaction D-erythro-1-(imidazol-4-yl)glycerol 3-phosphate = 3-(imidazol-4-yl)-2-oxopropyl phosphate + H2O. The protein operates within amino-acid biosynthesis; L-histidine biosynthesis; L-histidine from 5-phospho-alpha-D-ribose 1-diphosphate: step 6/9. This Polaromonas sp. (strain JS666 / ATCC BAA-500) protein is Imidazoleglycerol-phosphate dehydratase.